The chain runs to 95 residues: MGNINYQFGEIDAHGAAIRAQAAALETTHQAILATVRDAAEFWGGQGSTAHEMFIADLGRNFQMIYEQANSHGQKVQRASSSMADTDRSVSSAWS.

Residues 72 to 95 (HGQKVQRASSSMADTDRSVSSAWS) are disordered.

It belongs to the WXG100 family.

In Mycobacterium leprae (strain TN), this protein is Putative ESAT-6-like protein X.